A 107-amino-acid chain; its full sequence is U1-lycotoxin-Ls1l (107 aa).

An N-terminal signal peptide occupies residues 1-20 (MMKVLVVVALLVTLISYSSS). Positions 21–41 (EGIDDLEADELLSLMANEQTR) are excised as a propeptide. Intrachain disulfides connect C44–C59, C51–C68, C58–C86, and C70–C84.

The protein belongs to the neurotoxin 19 (CSTX) family. 04 (U1-Lctx) subfamily. In terms of tissue distribution, expressed by the venom gland.

The protein resides in the secreted. The sequence is that of U1-lycotoxin-Ls1l from Lycosa singoriensis (Wolf spider).